A 79-amino-acid polypeptide reads, in one-letter code: Small ribosomal subunit protein bS18 (79 aa).

Belongs to the bacterial ribosomal protein bS18 family. As to quaternary structure, part of the 30S ribosomal subunit. Forms a tight heterodimer with protein bS6.

Its function is as follows. Binds as a heterodimer with protein bS6 to the central domain of the 16S rRNA, where it helps stabilize the platform of the 30S subunit. The sequence is that of Small ribosomal subunit protein bS18 from Streptococcus suis (strain 98HAH33).